Here is a 235-residue protein sequence, read N- to C-terminus: Phosphoribosylaminoimidazole-succinocarboxamide synthase (235 aa).

This sequence belongs to the SAICAR synthetase family.

It catalyses the reaction 5-amino-1-(5-phospho-D-ribosyl)imidazole-4-carboxylate + L-aspartate + ATP = (2S)-2-[5-amino-1-(5-phospho-beta-D-ribosyl)imidazole-4-carboxamido]succinate + ADP + phosphate + 2 H(+). Its pathway is purine metabolism; IMP biosynthesis via de novo pathway; 5-amino-1-(5-phospho-D-ribosyl)imidazole-4-carboxamide from 5-amino-1-(5-phospho-D-ribosyl)imidazole-4-carboxylate: step 1/2. In Exiguobacterium sibiricum (strain DSM 17290 / CCUG 55495 / CIP 109462 / JCM 13490 / 255-15), this protein is Phosphoribosylaminoimidazole-succinocarboxamide synthase.